Consider the following 105-residue polypeptide: MMDLGDKINPNLSFLGINCVSFNQSPDILESLHQALPNMALLAYPNSGEVYDTEKKIWLPNSDKLNSWDTVVKQYISSGARIIGGCCRTSPKDIQEISAAVKKYT.

A Hcy-binding domain is found at 1–101 (MMDLGDKINP…KDIQEISAAV (101 aa)).

This is an uncharacterized protein from Saccharomyces cerevisiae (strain ATCC 204508 / S288c) (Baker's yeast).